The following is a 169-amino-acid chain: Probable prefoldin subunit 3 (169 aa).

It belongs to the prefoldin subunit alpha family. Heterohexamer of two PFD-alpha type and four PFD-beta type subunits.

In terms of biological role, binds specifically to cytosolic chaperonin (c-CPN) and transfers target proteins to it. Binds to nascent polypeptide chain and promotes folding in an environment in which there are many competing pathways for nonnative proteins. The sequence is that of Probable prefoldin subunit 3 from Schizosaccharomyces pombe (strain 972 / ATCC 24843) (Fission yeast).